The primary structure comprises 369 residues: Cobalt-precorrin-5B C(1)-methyltransferase (369 aa).

This sequence belongs to the CbiD family.

The enzyme catalyses Co-precorrin-5B + S-adenosyl-L-methionine = Co-precorrin-6A + S-adenosyl-L-homocysteine. Its pathway is cofactor biosynthesis; adenosylcobalamin biosynthesis; cob(II)yrinate a,c-diamide from sirohydrochlorin (anaerobic route): step 6/10. Functionally, catalyzes the methylation of C-1 in cobalt-precorrin-5B to form cobalt-precorrin-6A. The chain is Cobalt-precorrin-5B C(1)-methyltransferase from Leptospira borgpetersenii serovar Hardjo-bovis (strain JB197).